A 226-amino-acid chain; its full sequence is Cobalt transport protein CbiM 1 (226 aa).

6 consecutive transmembrane segments (helical) span residues 6-26, 43-63, 75-95, 107-127, 135-155, and 181-201; these read GFLPVEHAIGWSVASAPVVAY, MLLGVAAAFTFVLSALKMPSV, LGAILFGPSAVAPIGAVVLLF, TLGANIFSMAIVGPFAAAAVF, FPFGVGVFLAASLGDLLTYVT, and VFALTQIPLAISEGLLTVVVM.

Belongs to the CbiM family. In terms of assembly, forms an energy-coupling factor (ECF) transporter complex composed of an ATP-binding protein (A component, CbiO), a transmembrane protein (T component, CbiQ) and 2 possible substrate-capture proteins (S components, CbiM and CbiN) of unknown stoichimetry.

Its subcellular location is the cell inner membrane. It participates in cofactor biosynthesis; adenosylcobalamin biosynthesis. In terms of biological role, part of the energy-coupling factor (ECF) transporter complex CbiMNOQ involved in cobalt import. This is Cobalt transport protein CbiM 1 (cbim1) from Pelobacter propionicus (strain DSM 2379 / NBRC 103807 / OttBd1).